We begin with the raw amino-acid sequence, 339 residues long: DNA-directed RNA polymerase subunit alpha (339 aa).

Residues 1–233 (MVREKVRIST…DLFIPFLHAE (233 aa)) are alpha N-terminal domain (alpha-NTD). Positions 267 to 339 (IALKSIFIDQ…FTINLPKNKF (73 aa)) are alpha C-terminal domain (alpha-CTD).

The protein belongs to the RNA polymerase alpha chain family. As to quaternary structure, in plastids the minimal PEP RNA polymerase catalytic core is composed of four subunits: alpha, beta, beta', and beta''. When a (nuclear-encoded) sigma factor is associated with the core the holoenzyme is formed, which can initiate transcription.

The protein resides in the plastid. The protein localises to the chloroplast. The catalysed reaction is RNA(n) + a ribonucleoside 5'-triphosphate = RNA(n+1) + diphosphate. In terms of biological role, DNA-dependent RNA polymerase catalyzes the transcription of DNA into RNA using the four ribonucleoside triphosphates as substrates. This is DNA-directed RNA polymerase subunit alpha from Populus trichocarpa (Western balsam poplar).